The following is a 439-amino-acid chain: Exodeoxyribonuclease 7 large subunit (439 aa).

The protein belongs to the XseA family. As to quaternary structure, heterooligomer composed of large and small subunits.

Its subcellular location is the cytoplasm. The catalysed reaction is Exonucleolytic cleavage in either 5'- to 3'- or 3'- to 5'-direction to yield nucleoside 5'-phosphates.. Bidirectionally degrades single-stranded DNA into large acid-insoluble oligonucleotides, which are then degraded further into small acid-soluble oligonucleotides. This Haemophilus influenzae (strain 86-028NP) protein is Exodeoxyribonuclease 7 large subunit.